A 628-amino-acid polypeptide reads, in one-letter code: MLSRLLIVPLIFALAGLAISAPVNDGTEADNDERAASLLVHLKGDKDGGGLTGSPDGVSAGTTDGTDSSKELAGGAVDSSPDTTDTPDASSSDIFPDTNNRDTSVETTGNPDDSDAPDAAESAGSQDTTDAADASEAVAETVDTYDIPDTDGADDREKVSTEVSTEDLDSAGVDKSPESDSTESPGSDSAESPGSDSAESPGSDSTESPGSDSTESPRSDSTDEVLTDVQADSADVTSDDMDEATETDKDDDKSDDKSDADAATDKDDSDEDKDTELDGKAHAEDTQTEEAADSDSKQGAADSDSDTDDDRPEKDVKNDSDDSKDTTEDDKPDKDDKKNRDSADNSNDDSDEMIQVPREELEQQEINLKEGGVIGSQEETVASDMEEGSDVGDQKPGPEDSIEEGSPVGRQDFKHPQDSEEEELEKEAKKEKELEEAEEERTLKTIESDSQEDSVDESEAEPDSNSKKDIGTSDAPEPQEDDSEEDTDDSMMKEPKDSDDAESDKDDKDKNDMDKEDMDKDDMDKDDMDKDDMDKDDVDKDASDSVDDQSESDAEPGADSHTVVDEIDGEETMTPDSEEIMKSGEMDSVVEATEVPADILDQPDQQDDMTQGASQAADAAATALAAQS.

The N-terminal stretch at 1 to 20 is a signal peptide; that stretch reads MLSRLLIVPLIFALAGLAIS. The interval 43–628 is disordered; it reads KGDKDGGGLT…AAATALAAQS (586 aa). Residues 78–93 are compositionally biased toward low complexity; that stretch reads DSSPDTTDTPDASSSD. The segment covering 182–214 has biased composition (polar residues); that stretch reads TESPGSDSAESPGSDSAESPGSDSTESPGSDST. Composition is skewed to basic and acidic residues over residues 246–266, 276–285, and 311–343; these read ETDKDDDKSDDKSDADAATDK, ELDGKAHAED, and RPEKDVKNDSDDSKDTTEDDKPDKDDKKNRDSA. N-linked (GlcNAc...) asparagine glycosylation occurs at Asn318. Composition is skewed to acidic residues over residues 449–462, 477–489, 514–536, 544–556, and 565–578; these read DSQEDSVDESEAEP, EPQEDDSEEDTDD, DKEDMDKDDMDKDDMDKDDMDKD, DSVDDQSESDAEP, and DEIDGEETMTPDSE. Residues 613 to 628 are compositionally biased toward low complexity; it reads ASQAADAAATALAAQS.

Specifically expressed in otolith matrix-producing cells.

The protein resides in the secreted. It is found in the extracellular space. The protein localises to the extracellular matrix. Functionally, calcium-binding component of otoliths, a calcium carbonate structure of the inner ear involved in hearing and balance sensing. Binds calcium. This is Otolith matrix protein OMM-64 from Oncorhynchus mykiss (Rainbow trout).